Here is a 418-residue protein sequence, read N- to C-terminus: UDP-glucuronic acid decarboxylase 1 (418 aa).

Topologically, residues 1–17 (MMRMSWMVTVINRRMMK) are cytoplasmic. The chain crosses the membrane as a helical; Signal-anchor for type II membrane protein span at residues 18-38 (ILIALALIAYIASVWGTYANM). The Lumenal segment spans residues 39–418 (RSIQEHGEMK…RMKKGRPRHN (380 aa)). Residues G96, F97, V98, D117, N118, F120, T121, G122, D142, and V143 each contribute to the NAD(+) site. L147 and Y148 together coordinate UDP-alpha-D-glucuronate. Residues L157 and S159 each contribute to the NAD(+) site. K175 provides a ligand contact to UDP-alpha-D-glucuronate. T176 serves as a coordination point for NAD(+). UDP-alpha-D-glucuronate-binding residues include N183, G186, K189, and R190. Residues A198, Y229, and K233 each coordinate NAD(+). Y229 (proton acceptor) is an active-site residue. UDP-alpha-D-glucuronate-binding residues include Y243, Q246, and E247. 3 residues coordinate NAD(+): T259, H265, and R270. Residues N314 and N383 are each glycosylated (N-linked (GlcNAc...) asparagine). Residues 397 to 418 (ANNQYIPKPKAARMKKGRPRHN) are disordered. A compositionally biased stretch (basic residues) spans 406–418 (KAARMKKGRPRHN).

The protein belongs to the NAD(P)-dependent epimerase/dehydratase family. UDP-glucuronic acid decarboxylase subfamily. In terms of assembly, homodimer and homotetramer. It depends on NAD(+) as a cofactor.

It is found in the golgi apparatus. The protein localises to the golgi stack membrane. The enzyme catalyses UDP-alpha-D-glucuronate + H(+) = UDP-alpha-D-xylose + CO2. Its pathway is nucleotide-sugar biosynthesis; UDP-alpha-D-xylose biosynthesis; UDP-alpha-D-xylose from UDP-alpha-D-glucuronate: step 1/1. Its function is as follows. Catalyzes the NAD-dependent decarboxylation of UDP-glucuronic acid to UDP-xylose. Necessary for the biosynthesis of the core tetrasaccharide in glycosaminoglycan biosynthesis. Essential during embryogenesis for craniofacial development. The chain is UDP-glucuronic acid decarboxylase 1 from Danio rerio (Zebrafish).